The following is a 440-amino-acid chain: Protein disulfide-isomerase A6 (440 aa).

A signal peptide spans 1–19 (MALLVLGLVSCTFFLAVNG). Thioredoxin domains are found at residues 20–133 (LYSS…ALRQ) and 154–287 (SDSS…EDIA). Active-site nucleophile residues include cysteine 55 and cysteine 58. A disulfide bond links cysteine 55 and cysteine 58. Serine 129 is modified (phosphoserine). Residues 141–161 (GRSGGYSSGKQGRSDSSSKKD) form a disordered region. The segment covering 152 to 161 (GRSDSSSKKD) has biased composition (basic and acidic residues). Serine 156 carries the post-translational modification Phosphoserine; by FAM20C. Serine 158 carries the post-translational modification Phosphoserine. Catalysis depends on nucleophile residues cysteine 190 and cysteine 193. An intrachain disulfide couples cysteine 190 to cysteine 193. The residue at position 428 (serine 428) is a Phosphoserine. Residues 437-440 (KDEL) carry the Prevents secretion from ER motif.

It belongs to the protein disulfide isomerase family. Part of a large chaperone multiprotein complex comprising DNAJB11, HSP90B1, HSPA5, HYOU, PDIA2, PDIA4, PDIA6, PPIB, SDF2L1, UGGT1 and very small amounts of ERP29, but not, or at very low levels, CALR nor CANX. Interacts with MICA on the surface of tumor cells, leading to MICA disulfide bond reduction which is required for its release from tumor cells. Interacts with ITGB3 following platelet stimulation. Interacts with ERN1; the interaction is direct. Interacts with EIF2AK3. As to expression, expressed in platelets (at protein level).

It is found in the endoplasmic reticulum lumen. Its subcellular location is the cell membrane. The protein resides in the melanosome. The catalysed reaction is Catalyzes the rearrangement of -S-S- bonds in proteins.. In terms of biological role, may function as a chaperone that inhibits aggregation of misfolded proteins. Negatively regulates the unfolded protein response (UPR) through binding to UPR sensors such as ERN1, which in turn inactivates ERN1 signaling. May also regulate the UPR via the EIF2AK3 UPR sensor. Plays a role in platelet aggregation and activation by agonists such as convulxin, collagen and thrombin. This Homo sapiens (Human) protein is Protein disulfide-isomerase A6 (PDIA6).